A 174-amino-acid chain; its full sequence is Actin-related protein 2/3 complex subunit 3 (174 aa).

Belongs to the ARPC3 family. As to quaternary structure, component of the Arp2/3 complex composed of arp2, act2, arc1/p41-ARC, arc2/p34-ARC, arc3/p21-ARC, arc4/p20-ARC and arc5/p16-ARC.

Its subcellular location is the cytoplasm. The protein resides in the cytoskeleton. It localises to the actin patch. Functions as a component of the Arp2/3 complex which is involved in regulation of actin polymerization and together with an activating nucleation-promoting factor (NPF) mediates the formation of branched actin networks. The polypeptide is Actin-related protein 2/3 complex subunit 3 (arc3) (Schizosaccharomyces pombe (strain 972 / ATCC 24843) (Fission yeast)).